The primary structure comprises 379 residues: MSATLALTEQLIARASVTPDDQHCQQLMTERLAALGFECETIASHGVTNLWAVKRGADGRDGKLLAFAGHTDVVPTGPLEQWTSPPFVPTHRDGKLYGRGAADMKTSLAAFVVASEEFVAAHPGHRGAIAFLITSDEEGPATDGTVKVVELLETRGERVDYCIVGEPTSSAELGDVVKNGRRGSMSGELVVKGVQGHIAYPHLAKNPIHLLAPALAELAAEQWDAGNEYFPPTTWQVSNLHAGTGATNVIPGHADLMFNFRFSTASTVEGLQARVHAILGKHGLEYTLKWSVSGLPFLTPRGDLSNALENAIRAETGLTTELSTTGGTSDGRFIARICPQVIEFGPPNGSIHKIDEHIDVRFVDPLKNVYRRVLEQLIA.

His-70 lines the Zn(2+) pocket. Asp-72 is a catalytic residue. Asp-103 provides a ligand contact to Zn(2+). Glu-137 (proton acceptor) is an active-site residue. Residues Glu-138, Glu-166, and His-352 each contribute to the Zn(2+) site.

This sequence belongs to the peptidase M20A family. DapE subfamily. As to quaternary structure, homodimer. It depends on Zn(2+) as a cofactor. Co(2+) is required as a cofactor.

It catalyses the reaction N-succinyl-(2S,6S)-2,6-diaminopimelate + H2O = (2S,6S)-2,6-diaminopimelate + succinate. Its pathway is amino-acid biosynthesis; L-lysine biosynthesis via DAP pathway; LL-2,6-diaminopimelate from (S)-tetrahydrodipicolinate (succinylase route): step 3/3. Catalyzes the hydrolysis of N-succinyl-L,L-diaminopimelic acid (SDAP), forming succinate and LL-2,6-diaminopimelate (DAP), an intermediate involved in the bacterial biosynthesis of lysine and meso-diaminopimelic acid, an essential component of bacterial cell walls. The polypeptide is Succinyl-diaminopimelate desuccinylase (Burkholderia ambifaria (strain ATCC BAA-244 / DSM 16087 / CCUG 44356 / LMG 19182 / AMMD) (Burkholderia cepacia (strain AMMD))).